Reading from the N-terminus, the 446-residue chain is N-succinylarginine dihydrolase (446 aa).

Substrate contacts are provided by residues 19–28, Asn110, and 137–138; these read AGLSFGNVAS and HR. The active site involves Glu174. Residue Arg213 coordinates substrate. His249 is an active-site residue. Substrate contacts are provided by Asp251 and Asn364. Cys370 serves as the catalytic Nucleophile.

This sequence belongs to the succinylarginine dihydrolase family. In terms of assembly, homodimer.

The enzyme catalyses N(2)-succinyl-L-arginine + 2 H2O + 2 H(+) = N(2)-succinyl-L-ornithine + 2 NH4(+) + CO2. It functions in the pathway amino-acid degradation; L-arginine degradation via AST pathway; L-glutamate and succinate from L-arginine: step 2/5. In terms of biological role, catalyzes the hydrolysis of N(2)-succinylarginine into N(2)-succinylornithine, ammonia and CO(2). The chain is N-succinylarginine dihydrolase from Burkholderia ambifaria (strain ATCC BAA-244 / DSM 16087 / CCUG 44356 / LMG 19182 / AMMD) (Burkholderia cepacia (strain AMMD)).